The primary structure comprises 158 residues: Transcription elongation factor GreA (158 aa).

Positions 45–72 (AEYHAAREQQSFIEGRIKQLEGELSHAE) form a coiled coil.

The protein belongs to the GreA/GreB family.

Functionally, necessary for efficient RNA polymerase transcription elongation past template-encoded arresting sites. The arresting sites in DNA have the property of trapping a certain fraction of elongating RNA polymerases that pass through, resulting in locked ternary complexes. Cleavage of the nascent transcript by cleavage factors such as GreA or GreB allows the resumption of elongation from the new 3'terminus. GreA releases sequences of 2 to 3 nucleotides. The sequence is that of Transcription elongation factor GreA from Xanthomonas campestris pv. campestris (strain ATCC 33913 / DSM 3586 / NCPPB 528 / LMG 568 / P 25).